A 375-amino-acid polypeptide reads, in one-letter code: Succinyl-diaminopimelate desuccinylase (375 aa).

Zn(2+) is bound at residue His-66. Residue Asp-68 is part of the active site. Asp-99 serves as a coordination point for Zn(2+). Catalysis depends on Glu-133, which acts as the Proton acceptor. Positions 134, 162, and 348 each coordinate Zn(2+).

It belongs to the peptidase M20A family. DapE subfamily. In terms of assembly, homodimer. Zn(2+) is required as a cofactor. The cofactor is Co(2+).

It carries out the reaction N-succinyl-(2S,6S)-2,6-diaminopimelate + H2O = (2S,6S)-2,6-diaminopimelate + succinate. It participates in amino-acid biosynthesis; L-lysine biosynthesis via DAP pathway; LL-2,6-diaminopimelate from (S)-tetrahydrodipicolinate (succinylase route): step 3/3. Its function is as follows. Catalyzes the hydrolysis of N-succinyl-L,L-diaminopimelic acid (SDAP), forming succinate and LL-2,6-diaminopimelate (DAP), an intermediate involved in the bacterial biosynthesis of lysine and meso-diaminopimelic acid, an essential component of bacterial cell walls. The chain is Succinyl-diaminopimelate desuccinylase from Shigella flexneri serotype 5b (strain 8401).